The sequence spans 87 residues: DNA-directed RNA polymerase subunit Rpo5 (87 aa).

It belongs to the archaeal Rpo5/eukaryotic RPB5 RNA polymerase subunit family. Part of the RNA polymerase complex.

It is found in the cytoplasm. The catalysed reaction is RNA(n) + a ribonucleoside 5'-triphosphate = RNA(n+1) + diphosphate. DNA-dependent RNA polymerase (RNAP) catalyzes the transcription of DNA into RNA using the four ribonucleoside triphosphates as substrates. This Thermoplasma volcanium (strain ATCC 51530 / DSM 4299 / JCM 9571 / NBRC 15438 / GSS1) protein is DNA-directed RNA polymerase subunit Rpo5.